Consider the following 142-residue polypeptide: Large ribosomal subunit protein uL16 (142 aa).

Belongs to the universal ribosomal protein uL16 family. In terms of assembly, part of the 50S ribosomal subunit.

In terms of biological role, binds 23S rRNA and is also seen to make contacts with the A and possibly P site tRNAs. This Mycoplasmopsis pulmonis (strain UAB CTIP) (Mycoplasma pulmonis) protein is Large ribosomal subunit protein uL16.